Consider the following 530-residue polypeptide: Na(+)/H(+) antiporter NhaB (530 aa).

12 consecutive transmembrane segments (helical) span residues 13 to 33 (FLGK…VINP), 34 to 54 (LVFF…EFIF), 90 to 110 (LVAN…IYFM), 121 to 141 (ILIG…TAAF), 145 to 165 (FLDA…FYAI), 205 to 225 (LLIH…VGEP), 241 to 261 (FIIR…LTCI), 306 to 326 (GLIA…VGLI), 327 to 347 (GLSV…HSMG), 351 to 371 (EEAL…AVII), 455 to 475 (GQAA…QLSY), and 481 to 501 (MALP…IFFL).

It belongs to the NhaB Na(+)/H(+) (TC 2.A.34) antiporter family.

The protein localises to the cell inner membrane. It catalyses the reaction 2 Na(+)(in) + 3 H(+)(out) = 2 Na(+)(out) + 3 H(+)(in). Na(+)/H(+) antiporter that extrudes sodium in exchange for external protons. This is Na(+)/H(+) antiporter NhaB from Aliivibrio fischeri (strain MJ11) (Vibrio fischeri).